We begin with the raw amino-acid sequence, 172 residues long: Adenine phosphoribosyltransferase (172 aa).

This sequence belongs to the purine/pyrimidine phosphoribosyltransferase family. In terms of assembly, homodimer.

Its subcellular location is the cytoplasm. The enzyme catalyses AMP + diphosphate = 5-phospho-alpha-D-ribose 1-diphosphate + adenine. The protein operates within purine metabolism; AMP biosynthesis via salvage pathway; AMP from adenine: step 1/1. Its function is as follows. Catalyzes a salvage reaction resulting in the formation of AMP, that is energically less costly than de novo synthesis. The protein is Adenine phosphoribosyltransferase of Latilactobacillus sakei subsp. sakei (strain 23K) (Lactobacillus sakei subsp. sakei).